Reading from the N-terminus, the 115-residue chain is uncharacterized protein (115 aa).

It belongs to the transposase 34 family.

This is an uncharacterized protein from Sinorhizobium fredii (strain NBRC 101917 / NGR234).